We begin with the raw amino-acid sequence, 463 residues long: MSTAALVEGKIVQCIGAVIDVEFPRDSMPKIYDALILDGSELTLEVQQQLGDGVVRTICLGASDGLRRGLTVKNTSKPISVPVGKPTLGRIMDVLGRPIDEAGPIESEHTRSIHQKAPAFDELSPSTELLETGIKVIDLICPFAKGGKVGLFGGAGVGKTVNMMELINNIAKEHGGYSVFAGVGERTREGNDFYHEMKDSNVLDKVALVYGQMNEPPGNRLRVLTGLTMAEHFRDEGLDVLFFVDNIYRFTLAGTEVSALLGRMPSAVGYQPTLAEEMGKLQERITSTKKGSITSVQAVYVPADDLTDPSPATTFGHLDATVVLSRDIASLGIYPAVDPLDSTSRQIDPNVIGEEHYSITRRVQQTLQRYKELRDIIAILGMDELSPEDKLSVARARKIQRFLSQPFHVAEVFTGSPGKYVPLKETIRGFKMIVDGECDHLPEQAFYMVGTIDEAFEKAKKIS.

153–160 (GGAGVGKT) is an ATP binding site.

The protein belongs to the ATPase alpha/beta chains family. In terms of assembly, F-type ATPases have 2 components, CF(1) - the catalytic core - and CF(0) - the membrane proton channel. CF(1) has five subunits: alpha(3), beta(3), gamma(1), delta(1), epsilon(1). CF(0) has three main subunits: a(1), b(2) and c(9-12). The alpha and beta chains form an alternating ring which encloses part of the gamma chain. CF(1) is attached to CF(0) by a central stalk formed by the gamma and epsilon chains, while a peripheral stalk is formed by the delta and b chains.

It is found in the cell inner membrane. The catalysed reaction is ATP + H2O + 4 H(+)(in) = ADP + phosphate + 5 H(+)(out). Functionally, produces ATP from ADP in the presence of a proton gradient across the membrane. The catalytic sites are hosted primarily by the beta subunits. This chain is ATP synthase subunit beta, found in Burkholderia cepacia (Pseudomonas cepacia).